Consider the following 90-residue polypeptide: Neuropeptide-like 3 (90 aa).

The N-terminal stretch at 1–16 is a signal peptide; sequence MFKLCVFVALLSLAAA. 2 consecutive propeptides follow at residues 17–54 and 67–79; these read APAP…LAPQ and AITQ…LLIK. Position 89 is an isoleucine amide (isoleucine 89).

The protein resides in the secreted. In Drosophila melanogaster (Fruit fly), this protein is Neuropeptide-like 3 (Nplp3).